The sequence spans 258 residues: Acyl-[acyl-carrier-protein]--UDP-N-acetylglucosamine O-acyltransferase (258 aa).

This sequence belongs to the transferase hexapeptide repeat family. LpxA subfamily. Homotrimer.

The protein localises to the cytoplasm. It catalyses the reaction a (3R)-hydroxyacyl-[ACP] + UDP-N-acetyl-alpha-D-glucosamine = a UDP-3-O-[(3R)-3-hydroxyacyl]-N-acetyl-alpha-D-glucosamine + holo-[ACP]. Its pathway is glycolipid biosynthesis; lipid IV(A) biosynthesis; lipid IV(A) from (3R)-3-hydroxytetradecanoyl-[acyl-carrier-protein] and UDP-N-acetyl-alpha-D-glucosamine: step 1/6. Functionally, involved in the biosynthesis of lipid A, a phosphorylated glycolipid that anchors the lipopolysaccharide to the outer membrane of the cell. The polypeptide is Acyl-[acyl-carrier-protein]--UDP-N-acetylglucosamine O-acyltransferase (Pseudomonas putida (strain W619)).